A 543-amino-acid chain; its full sequence is Protein pbn1 (543 aa).

At 1–503 (MRRRITFVQR…KGFFQSKAIE (503 aa)) the chain is on the lumenal side. N-linked (GlcNAc...) asparagine glycosylation is present at Asn409. Residues 504 to 524 (LGTMIVIGLGSLWVLWKLGAI) form a helical membrane-spanning segment. Over 525–543 (AWSSGTRPQRKSTKQKKSE) the chain is Cytoplasmic.

It belongs to the PIGX family.

It is found in the endoplasmic reticulum membrane. The protein operates within glycolipid biosynthesis; glycosylphosphatidylinositol-anchor biosynthesis. Its function is as follows. Required for proper folding and/or the stability of a subset of proteins in the endoplasmic reticulum. Component of glycosylphosphatidylinositol-mannosyltransferase 1 which transfers the first of the 4 mannoses in the GPI-anchor precursors during GPI-anchor biosynthesis. Probably acts by stabilizing the mannosyltransferase gpi14. In Aspergillus oryzae (strain ATCC 42149 / RIB 40) (Yellow koji mold), this protein is Protein pbn1 (pbn1).